Reading from the N-terminus, the 162-residue chain is UPF0114 protein PA4574 (162 aa).

The next 3 membrane-spanning stretches (helical) occupy residues tyrosine 10–isoleucine 32, leucine 53–isoleucine 75, and leucine 136–leucine 156.

Belongs to the UPF0114 family.

The protein resides in the cell membrane. This Pseudomonas aeruginosa (strain ATCC 15692 / DSM 22644 / CIP 104116 / JCM 14847 / LMG 12228 / 1C / PRS 101 / PAO1) protein is UPF0114 protein PA4574.